The sequence spans 850 residues: MEKSKAKQGENEHMPVNNPSTQIYQLQALASELKTGFTEAMQELTRIQHGEYALEEKVKSCRCSMEEKVTEMKNSLNYFKEELSNAMSMIQAITSKQEEMQQKIEQLQQEKRRESRKVKAKKAQKEEHGAQAGPASAPAPGSAPTQGSPFRSINVPEAGLPSDDFTNMLPSQNYEKAQESRSVHVGDSNVKGMMGPGVNPTTPESDENLKPSLSAEIQSKGHHTPGLWRQPKEGKEWGEEYVTKDHPDKLKDAGQGRHSSLENVLCETSLAAKRQTVALELLESERKYVINISLILKIKATFQGSDGKRNPKERSLFPGSLRYLVQQHLDLLHALQERVLKWPRQGVLGDLFLKLTNDENNFLDYYVAYLRDLPECISLVHVVVLKEGDEEIKSDIYTLFFHIVQRIPEYLIHLQNVLKFTEQEHPDYYLLLVCVQRLRVFISHYTLLFQCNEDLLIQKRKKLKKSSMAKLYKGLASQCANAGQDASPNAGQEAVHDSGVHSEEMLQPYPSSSSSAPAVSHLMAPAKKGQQQQSLMESMQPGKPGDWELEGRKHERPESLLAPAQFCAAEQDVKALAGPLQAIPEMDFEPSSAEPLGNVERSLRGPPELLPDARGFVPAGYEEFEYGGEIFALPAPYDEEPFQAPALFDNCSPASSESSLDICFLRPVSFAMEAERPEHALQPLPKSATSPASSSGAYKLEAAQAQAHGKAKPLSRSLKEFPRTPPAEGVAPRLYSTRSSSGGRAPLKVERAPAPHGPAAAAAASRGAPRTFFPQQRSQSEKQTYLEEMHLEDATRFCPKEERESEQTSFSDQNPRQDQKGGFRSSFRKLFKKKNGNSTGEDFCGPWGWW.

Basic and acidic residues-rich tracts occupy residues 1 to 13 (MEKS…ENEH) and 98 to 113 (EEMQ…EKRR). 2 disordered regions span residues 1–21 (MEKS…NPST) and 98–209 (EEMQ…DENL). A coiled-coil region spans residues 54–128 (LEEKVKSCRC…KAKKAQKEEH (75 aa)). A compositionally biased stretch (low complexity) spans 130–149 (AQAGPASAPAPGSAPTQGSP). Residues 164–175 (DFTNMLPSQNYE) show a composition bias toward polar residues. The DH domain occupies 273 to 448 (KRQTVALELL…RVFISHYTLL (176 aa)). 2 disordered regions span residues 504–550 (EMLQ…WELE) and 702–850 (AAQA…WGWW). 2 stretches are compositionally biased toward low complexity: residues 510 to 520 (PSSSSSAPAVS) and 754 to 770 (APHG…GAPR). Omega-N-methylarginine is present on Arg766. Polar residues predominate over residues 773-783 (FPQQRSQSEKQ). The span at 784–806 (TYLEEMHLEDATRFCPKEERESE) shows a compositional bias: basic and acidic residues. Positions 826-835 (SFRKLFKKKN) are enriched in basic residues.

The sequence is that of Rho guanine nucleotide exchange factor 33 (Arhgef33) from Mus musculus (Mouse).